The following is a 180-amino-acid chain: DNA-directed RNA polymerase subunit Rpo7 (180 aa).

The 84-residue stretch at 82 to 165 folds into the S1 motif domain; the sequence is QEVVEGEVLQ…RLPRIALTMR (84 aa).

Belongs to the eukaryotic RPB7/RPC8 RNA polymerase subunit family. As to quaternary structure, part of the 13-subunit RNA polymerase complex. Forms a stalk with Rpo4 that extends from the main structure.

It is found in the cytoplasm. It catalyses the reaction RNA(n) + a ribonucleoside 5'-triphosphate = RNA(n+1) + diphosphate. In terms of biological role, DNA-dependent RNA polymerase (RNAP) catalyzes the transcription of DNA into RNA using the four ribonucleoside triphosphates as substrates. The highly mobile Rpo4/Rpo7 heterodimer is conditionally required for transcription initiation. This chain is DNA-directed RNA polymerase subunit Rpo7, found in Saccharolobus shibatae (strain ATCC 51178 / DSM 5389 / JCM 8931 / NBRC 15437 / B12) (Sulfolobus shibatae).